The primary structure comprises 235 residues: Orotidine 5'-phosphate decarboxylase (235 aa).

Substrate is bound by residues aspartate 10, lysine 33, aspartate 60–threonine 69, threonine 123, arginine 185, glutamine 194, glycine 214, and arginine 215. Lysine 62 (proton donor) is an active-site residue.

Belongs to the OMP decarboxylase family. Type 1 subfamily. Homodimer.

The enzyme catalyses orotidine 5'-phosphate + H(+) = UMP + CO2. The protein operates within pyrimidine metabolism; UMP biosynthesis via de novo pathway; UMP from orotate: step 2/2. In terms of biological role, catalyzes the decarboxylation of orotidine 5'-monophosphate (OMP) to uridine 5'-monophosphate (UMP). The polypeptide is Orotidine 5'-phosphate decarboxylase (Lactobacillus acidophilus (strain ATCC 700396 / NCK56 / N2 / NCFM)).